We begin with the raw amino-acid sequence, 91 residues long: Small ribosomal subunit protein uS15c (91 aa).

Belongs to the universal ribosomal protein uS15 family. Part of the 30S ribosomal subunit.

The protein localises to the plastid. Its subcellular location is the chloroplast. The protein is Small ribosomal subunit protein uS15c (rps15) of Phalaenopsis aphrodite subsp. formosana (Moth orchid).